A 1066-amino-acid chain; its full sequence is DNA-directed RNA polymerase subunit beta (1066 aa).

It belongs to the RNA polymerase beta chain family. As to quaternary structure, in plastids the minimal PEP RNA polymerase catalytic core is composed of four subunits: alpha, beta, beta', and beta''. When a (nuclear-encoded) sigma factor is associated with the core the holoenzyme is formed, which can initiate transcription.

The protein localises to the plastid. Its subcellular location is the chloroplast. The catalysed reaction is RNA(n) + a ribonucleoside 5'-triphosphate = RNA(n+1) + diphosphate. Its function is as follows. DNA-dependent RNA polymerase catalyzes the transcription of DNA into RNA using the four ribonucleoside triphosphates as substrates. The chain is DNA-directed RNA polymerase subunit beta from Psilotum nudum (Whisk fern).